The following is a 178-amino-acid chain: Inorganic pyrophosphatase (178 aa).

Positions 30, 44, and 56 each coordinate substrate. The Mg(2+) site is built by Asp66, Asp71, and Asp103. Position 140 (Tyr140) interacts with substrate.

This sequence belongs to the PPase family. Homohexamer. Requires Mg(2+) as cofactor.

It localises to the cytoplasm. The enzyme catalyses diphosphate + H2O = 2 phosphate + H(+). Functionally, catalyzes the hydrolysis of inorganic pyrophosphate (PPi) forming two phosphate ions. The sequence is that of Inorganic pyrophosphatase from Thermococcus kodakarensis (strain ATCC BAA-918 / JCM 12380 / KOD1) (Pyrococcus kodakaraensis (strain KOD1)).